We begin with the raw amino-acid sequence, 332 residues long: tRNA dimethylallyltransferase (332 aa).

17–24 contacts ATP; that stretch reads GPTCSGKS. 19–24 is a binding site for substrate; that stretch reads TCSGKS. Interaction with substrate tRNA regions lie at residues 42–45 and 166–170; these read DSMQ and QRISR.

This sequence belongs to the IPP transferase family. Monomer. The cofactor is Mg(2+).

It catalyses the reaction adenosine(37) in tRNA + dimethylallyl diphosphate = N(6)-dimethylallyladenosine(37) in tRNA + diphosphate. Functionally, catalyzes the transfer of a dimethylallyl group onto the adenine at position 37 in tRNAs that read codons beginning with uridine, leading to the formation of N6-(dimethylallyl)adenosine (i(6)A). This Gluconobacter oxydans (strain 621H) (Gluconobacter suboxydans) protein is tRNA dimethylallyltransferase.